The chain runs to 143 residues: MKTFSAKPHEVKREWFVIDAQDKVLGRVAAEVASRLRGKHKPEYTPHVDTGDYIIVINADKLRVTGAKFEDKKYFRHSGFPGGIYERTFREMQEQFPGRALEQAVKGMLPKGPLGYAMIKKLKVYAGAEHAHAAQQPKVLELK.

It belongs to the universal ribosomal protein uL13 family. Part of the 50S ribosomal subunit.

This protein is one of the early assembly proteins of the 50S ribosomal subunit, although it is not seen to bind rRNA by itself. It is important during the early stages of 50S assembly. This chain is Large ribosomal subunit protein uL13, found in Neisseria meningitidis serogroup C (strain 053442).